The following is a 1049-amino-acid chain: DEAD-box ATP-dependent RNA helicase 42 (1049 aa).

2 disordered regions span residues 1–279 and 299–358; these read MGSS…DEID and MPAA…DDEE. Over residues 64–106 the composition is skewed to basic and acidic residues; that stretch reads KERDREERKAREREEREKEKERERARRREERDREERSRRREAA. A compositionally biased stretch (basic residues) spans 118–131; it reads RKRRRRSSHHHHHH. 2 stretches are compositionally biased toward basic and acidic residues: residues 161 to 170 and 181 to 199; these read KKEEEQKQLD and KEWQEMKRREEETKRREQE. Residues 201 to 214 show a composition bias toward low complexity; that stretch reads AGVGTSAAAAAAPA. The segment covering 229 to 239 has biased composition (acidic residues); it reads DGEESDEEGNQ. Over residues 262–272 the composition is skewed to low complexity; sequence NGGDNANGANA. The segment covering 304–313 has biased composition (basic and acidic residues); that stretch reads VDDKNDKSAK. The segment covering 335 to 358 has biased composition (acidic residues); the sequence is EDSDSDYADDEDDEGGSEDEDDEE. The Q motif motif lies at 424–452; that stretch reads KTWVQSGLTSKLLDTIKKLGFEKPMSIQA. In terms of domain architecture, Helicase ATP-binding spans 455–633; sequence LPIIMSGRDC…RKVLTKPVEI (179 aa). Residue 468 to 475 participates in ATP binding; sequence AKTGSGKT. The short motif at 581–584 is the DEAD box element; the sequence is DEAD. One can recognise a Helicase C-terminal domain in the interval 644–805; that stretch reads DITQLVEVRP…AVPEDLKGLA (162 aa). The segment at 816 to 868 is disordered; the sequence is TEQAHGTGYGGSGFKFNEEEDEARKSAKKAQAREYGYEEDKSDSDSDEEGGVR. Residues 855 to 864 show a composition bias toward acidic residues; the sequence is DKSDSDSDEE. Residues 1012-1037 adopt a coiled-coil conformation; it reads TELSVKKAKAELKRVLEDCANHALNL.

This sequence belongs to the DEAD box helicase family. DDX46/PRP5 subfamily.

It carries out the reaction ATP + H2O = ADP + phosphate + H(+). The chain is DEAD-box ATP-dependent RNA helicase 42 from Oryza sativa subsp. japonica (Rice).